A 122-amino-acid chain; its full sequence is T cell receptor gamma variable 9 (122 aa).

Residues 1-20 (MLSLLHTSTLAVLGALCVYG) form the signal peptide. One can recognise an Ig-like domain in the interval 27–122 (PQISSTKTLS…ATYYCALWEV (96 aa)). Residues C43 and C117 are joined by a disulfide bond.

In terms of assembly, gamma-delta TR is a heterodimer composed of a gamma and delta chain; disulfide-linked. The gamma-delta TR is associated with the transmembrane signaling CD3 coreceptor proteins following the stoichiometry: a single gamma-delta TR heterodimer associates with one CD3D-CD3E heterodimer, one CD3G-CD3E heterodimer and one CD247 homodimer forming a stable octameric structure. Upon activation, gamma-delta TR complex associates with FCER1G to initiate intracellular signaling.

The protein localises to the cell membrane. V region of the variable domain of T cell receptor (TR) gamma chain that participates in the antigen recognition. Gamma-delta TRs recognize a variety of self and foreign non-peptide antigens frequently expressed at the epithelial boundaries between the host and external environment, including endogenous lipids presented by MH-like protein CD1D and phosphoantigens presented by butyrophilin-like molecule BTN3A1. Upon antigen recognition induces rapid, innate-like immune responses involved in pathogen clearance and tissue repair. Binding of gamma-delta TR complex to antigen triggers phosphorylation of immunoreceptor tyrosine-based activation motifs (ITAMs) in the CD3 chains by the LCK and FYN kinases, allowing the recruitment, phosphorylation, and activation of ZAP70 that facilitates phosphorylation of the scaffolding proteins LCP2 and LAT. This lead to the formation of a supramolecular signalosome that recruits the phospholipase PLCG1, resulting in calcium mobilization and ERK activation, ultimately leading to T cell expansion and differentiation into effector cells. Gamma-delta TRs are produced through somatic rearrangement of a limited repertoire of variable (V), diversity (D), and joining (J) genes. The potential diversity of gamma-delta TRs is conferred by the unique ability to rearrange (D) genes in tandem and to utilize all three reading frames. The combinatorial diversity is considerably increased by the sequence exonuclease trimming and random nucleotide (N) region additions which occur during the V-(D)-J rearrangements. This Homo sapiens (Human) protein is T cell receptor gamma variable 9.